Here is a 101-residue protein sequence, read N- to C-terminus: Small ribosomal subunit protein uS10 (101 aa).

This sequence belongs to the universal ribosomal protein uS10 family. As to quaternary structure, part of the 30S ribosomal subunit.

In terms of biological role, involved in the binding of tRNA to the ribosomes. The chain is Small ribosomal subunit protein uS10 from Flavobacterium psychrophilum (strain ATCC 49511 / DSM 21280 / CIP 103535 / JIP02/86).